A 435-amino-acid chain; its full sequence is Eukaryotic peptide chain release factor subunit 1-3 (435 aa).

Position 2 is an N-acetylalanine (A2).

Belongs to the eukaryotic release factor 1 family. As to quaternary structure, heterodimer of two subunits, one of which binds GTP.

The protein localises to the cytoplasm. Its function is as follows. Directs the termination of nascent peptide synthesis (translation) in response to the termination codons UAA, UAG and UGA. Modulates plant growth and development. This Brassica oleracea var. botrytis (Cauliflower) protein is Eukaryotic peptide chain release factor subunit 1-3.